Here is an 87-residue protein sequence, read N- to C-terminus: Alpha-elapitoxin-Ls2a (87 aa).

The first 21 residues, 1 to 21, serve as a signal peptide directing secretion; it reads MKTLLLTLVVVTIVCLDLGYT. 5 disulfide bridges follow: Cys-24/Cys-41, Cys-34/Cys-62, Cys-47/Cys-51, Cys-66/Cys-77, and Cys-78/Cys-83.

The protein belongs to the three-finger toxin family. Long-chain subfamily. Type II alpha-neurotoxin sub-subfamily. As to expression, expressed by the venom gland.

The protein resides in the secreted. Functionally, binds with high affinity to muscular (tested on Torpedo marmorata, Kd=1.6 nM) and neuronal (chimeric alpha-7/CHRNA7, Kd=3 nM) nicotinic acetylcholine receptor (nAChR) and inhibits acetylcholine from binding to the receptor, thereby impairing neuromuscular and neuronal transmission. Also shows a very weak inhibition on GABA(A) receptors. The toxin (10 uM) inhibits 83% of current in channels composed of alpha-1-beta-3-gamma-2 (GABRA1-GABRB3-GABRG2) subunits, 39% of current in channels composed of alpha-2-beta-2-gamma-2 (GABRA2-GABRB2-GABRG2) subunits, and 33% of current in channels composed of alpha-5-beta-2-gamma-2 (GABRA5-GABRB2-GABRG2) subunits. The sequence is that of Alpha-elapitoxin-Ls2a from Laticauda semifasciata (Black-banded sea krait).